Reading from the N-terminus, the 923-residue chain is Protein translocase subunit SecA (923 aa).

Residues glutamine 86, 104–108 (GEGKT), and aspartate 512 contribute to the ATP site. Zn(2+)-binding residues include cysteine 906, cysteine 908, cysteine 917, and histidine 918.

Belongs to the SecA family. In terms of assembly, monomer and homodimer. Part of the essential Sec protein translocation apparatus which comprises SecA, SecYEG and auxiliary proteins SecDF-YajC and YidC. The cofactor is Zn(2+).

It is found in the cell inner membrane. The protein localises to the cytoplasm. It catalyses the reaction ATP + H2O + cellular proteinSide 1 = ADP + phosphate + cellular proteinSide 2.. Part of the Sec protein translocase complex. Interacts with the SecYEG preprotein conducting channel. Has a central role in coupling the hydrolysis of ATP to the transfer of proteins into and across the cell membrane, serving both as a receptor for the preprotein-SecB complex and as an ATP-driven molecular motor driving the stepwise translocation of polypeptide chains across the membrane. This is Protein translocase subunit SecA from Caulobacter vibrioides (strain ATCC 19089 / CIP 103742 / CB 15) (Caulobacter crescentus).